A 113-amino-acid chain; its full sequence is Large ribosomal subunit protein P2 (113 aa).

A disordered region spans residues Ser-60–Tyr-113. The segment covering Gly-74 to Ala-85 has biased composition (low complexity). Residues Glu-88 to Asp-99 show a composition bias toward acidic residues.

The protein belongs to the eukaryotic ribosomal protein P1/P2 family. P1 and P2 exist as dimers at the large ribosomal subunit. Post-translationally, phosphorylated.

Its function is as follows. Plays an important role in the elongation step of protein synthesis. This chain is Large ribosomal subunit protein P2, found in Euplotes raikovi.